The primary structure comprises 280 residues: PsbP domain-containing protein 7, chloroplastic (280 aa).

The N-terminal 36 residues, 1 to 36 (MSLKPYFSLLYSSPTNVKLSNFLIAQQPSGDLKTTP), are a transit peptide targeting the chloroplast.

The protein belongs to the PsbP family.

The protein localises to the plastid. It localises to the chloroplast. This chain is PsbP domain-containing protein 7, chloroplastic (PPD7), found in Arabidopsis thaliana (Mouse-ear cress).